An 860-amino-acid polypeptide reads, in one-letter code: MYMSTDEVRNAFLKFFESKGHQIVDSSSLVPHNDPTLLFTNAGMNQFKDCFLGAEKRAYTRATTAQRCVRAGGKHNDLENVGFTARHHTFFEMLGNFSFGDYFKEDAIAFAWEFLTETLKLPKDRLLVTVYETDDEAFDIWNQKVGVPADRIIRIGDKKGGKQYESDNFWTMGDTGPCGPCTEIFYDHGEHIWGGRPGTPEEDGDRFIEIWNNVFMQFNRHADGTMEPLPKPSVDTGMGIERISAIMQGVHSNYEIDVFQKLIKATAEIVGCEDLSNQSLRVIADHIRSCSFLIADGVMPSNEGRGYVLRRIIRRAVRHGNKLGAQGVFFHKLVGVLAEVMGSAADELKKQQAVVEKVLRIEEENFGRTLERGMVILNEALDALEGKELDGETVFKLYDTYGFPADLTNDVARERDFTIDEAGFEKAMEEQRQRAREAGQFGTDYNAKIKVDAQSEFCGYTSTQERSDVVALFVEGEETATLSAGDKAIVILQETPFYAESGGQCGDSGVLKTESGLFQVEDTQKLGNAIAHHGVLVEGVLAKGDQVTAIVDAERRAAISLNHSATHLLHAALRQVLGEHVAQKGSLVKAENLRFDFSHLEAVTAAELKEVERLVNAQIRRNHTIETNIMDIESAKQKGAMALFGEKYDDEVRVLSMGDFSTELCGGIHASNTGDIGLFKITSEGGIAAGIRRIEAVTGEAALEAIDAQARKFEEKLQDAANKAKSLEKEIQQLKDKLASQASANLIDQVKEIAGVKVLVAKLDGADNKALRGMVDELKNQMGSGIIMLGNVADDKVGLIAGVTQDLTSKVKAGELVNMVAQQVGGKGGGRPDMAQAGGTDSSALPSALASVDAWIAERL.

Residues histidine 563, histidine 567, cysteine 665, and histidine 669 each contribute to the Zn(2+) site. Residues 824–843 (VGGKGGGRPDMAQAGGTDSS) are disordered.

Belongs to the class-II aminoacyl-tRNA synthetase family. Zn(2+) serves as cofactor.

It is found in the cytoplasm. It catalyses the reaction tRNA(Ala) + L-alanine + ATP = L-alanyl-tRNA(Ala) + AMP + diphosphate. In terms of biological role, catalyzes the attachment of alanine to tRNA(Ala) in a two-step reaction: alanine is first activated by ATP to form Ala-AMP and then transferred to the acceptor end of tRNA(Ala). Also edits incorrectly charged Ser-tRNA(Ala) and Gly-tRNA(Ala) via its editing domain. The sequence is that of Alanine--tRNA ligase from Vibrio vulnificus (strain YJ016).